Reading from the N-terminus, the 702-residue chain is Ribosomal RNA large subunit methyltransferase K/L (702 aa).

In terms of domain architecture, THUMP spans 43–154 (LVYQSLMWSR…KETASIALDL (112 aa)).

It belongs to the methyltransferase superfamily. RlmKL family.

It is found in the cytoplasm. It carries out the reaction guanosine(2445) in 23S rRNA + S-adenosyl-L-methionine = N(2)-methylguanosine(2445) in 23S rRNA + S-adenosyl-L-homocysteine + H(+). The enzyme catalyses guanosine(2069) in 23S rRNA + S-adenosyl-L-methionine = N(2)-methylguanosine(2069) in 23S rRNA + S-adenosyl-L-homocysteine + H(+). Functionally, specifically methylates the guanine in position 2445 (m2G2445) and the guanine in position 2069 (m7G2069) of 23S rRNA. The polypeptide is Ribosomal RNA large subunit methyltransferase K/L (Escherichia coli O6:H1 (strain CFT073 / ATCC 700928 / UPEC)).